The sequence spans 379 residues: L-lactate dehydrogenase (379 aa).

The FMN hydroxy acid dehydrogenase domain maps to 1–379 (MIISSSTDYR…ISPDSLVRGL (379 aa)). Tyr-24 contacts substrate. Residues Ser-106 and Gln-127 each coordinate FMN. A substrate-binding site is contributed by Tyr-129. Position 155 (Thr-155) interacts with FMN. Substrate is bound at residue Arg-164. FMN is bound at residue Lys-251. His-275 (proton acceptor) is an active-site residue. Arg-278 is a substrate binding site. 306-330 (DSGIRSGLDVVRMIAQGADGVLIGR) serves as a coordination point for FMN.

Belongs to the FMN-dependent alpha-hydroxy acid dehydrogenase family. FMN is required as a cofactor.

It is found in the cell inner membrane. The enzyme catalyses (S)-lactate + A = pyruvate + AH2. Catalyzes the conversion of L-lactate to pyruvate. Is coupled to the respiratory chain. The chain is L-lactate dehydrogenase from Allorhizobium ampelinum (strain ATCC BAA-846 / DSM 112012 / S4) (Agrobacterium vitis (strain S4)).